We begin with the raw amino-acid sequence, 369 residues long: Probable dual-specificity RNA methyltransferase RlmN (369 aa).

Glu-108 acts as the Proton acceptor in catalysis. A Radical SAM core domain is found at 114–351; sequence YPDRATLCIS…LAQGVSCTVR (238 aa). Cys-121 and Cys-362 are oxidised to a cystine. Cys-128, Cys-132, and Cys-135 together coordinate [4Fe-4S] cluster. Residues 183-184, Ser-217, 240-242, and Asn-319 each bind S-adenosyl-L-methionine; these read GE and SLH. The active-site S-methylcysteine intermediate is the Cys-362.

The protein belongs to the radical SAM superfamily. RlmN family. Requires [4Fe-4S] cluster as cofactor.

The protein localises to the cytoplasm. The catalysed reaction is adenosine(2503) in 23S rRNA + 2 reduced [2Fe-2S]-[ferredoxin] + 2 S-adenosyl-L-methionine = 2-methyladenosine(2503) in 23S rRNA + 5'-deoxyadenosine + L-methionine + 2 oxidized [2Fe-2S]-[ferredoxin] + S-adenosyl-L-homocysteine. It carries out the reaction adenosine(37) in tRNA + 2 reduced [2Fe-2S]-[ferredoxin] + 2 S-adenosyl-L-methionine = 2-methyladenosine(37) in tRNA + 5'-deoxyadenosine + L-methionine + 2 oxidized [2Fe-2S]-[ferredoxin] + S-adenosyl-L-homocysteine. In terms of biological role, specifically methylates position 2 of adenine 2503 in 23S rRNA and position 2 of adenine 37 in tRNAs. The chain is Probable dual-specificity RNA methyltransferase RlmN from Rhodococcus jostii (strain RHA1).